Here is a 24-residue protein sequence, read N- to C-terminus: Brevinin-1Bf (24 aa).

Cys18 and Cys24 form a disulfide bridge.

In terms of tissue distribution, expressed by the skin glands.

Its subcellular location is the secreted. Antibacterial activity against Gram-positive bacterium S.aureus and Gram-negative bacterium E.coli. This is Brevinin-1Bf from Lithobates berlandieri (Rio Grande leopard frog).